Reading from the N-terminus, the 31-residue chain is Cytochrome b6-f complex subunit 6 (31 aa).

The helical transmembrane segment at 4 to 24 (LTSYFGFLLAALTITSVLFIG) threads the bilayer.

Belongs to the PetL family. In terms of assembly, the 4 large subunits of the cytochrome b6-f complex are cytochrome b6, subunit IV (17 kDa polypeptide, PetD), cytochrome f and the Rieske protein, while the 4 small subunits are PetG, PetL, PetM and PetN. The complex functions as a dimer.

The protein localises to the plastid. It localises to the chloroplast thylakoid membrane. Component of the cytochrome b6-f complex, which mediates electron transfer between photosystem II (PSII) and photosystem I (PSI), cyclic electron flow around PSI, and state transitions. PetL is important for photoautotrophic growth as well as for electron transfer efficiency and stability of the cytochrome b6-f complex. The chain is Cytochrome b6-f complex subunit 6 from Silene conica (Striped corn catchfly).